A 433-amino-acid polypeptide reads, in one-letter code: 4-hydroxy-3-methylbut-2-en-1-yl diphosphate synthase (flavodoxin) (433 aa).

A compositionally biased stretch (polar residues) spans 1–10 (MRYMQDSSMP). The segment at 1–24 (MRYMQDSSMPCQDASPPDVGAAPR) is disordered. The [4Fe-4S] cluster site is built by Cys-320, Cys-323, Cys-366, and Glu-373.

The protein belongs to the IspG family. [4Fe-4S] cluster is required as a cofactor.

It carries out the reaction (2E)-4-hydroxy-3-methylbut-2-enyl diphosphate + oxidized [flavodoxin] + H2O + 2 H(+) = 2-C-methyl-D-erythritol 2,4-cyclic diphosphate + reduced [flavodoxin]. The protein operates within isoprenoid biosynthesis; isopentenyl diphosphate biosynthesis via DXP pathway; isopentenyl diphosphate from 1-deoxy-D-xylulose 5-phosphate: step 5/6. In terms of biological role, converts 2C-methyl-D-erythritol 2,4-cyclodiphosphate (ME-2,4cPP) into 1-hydroxy-2-methyl-2-(E)-butenyl 4-diphosphate. This is 4-hydroxy-3-methylbut-2-en-1-yl diphosphate synthase (flavodoxin) from Bordetella bronchiseptica (strain ATCC BAA-588 / NCTC 13252 / RB50) (Alcaligenes bronchisepticus).